Reading from the N-terminus, the 265-residue chain is Methylthioribulose-1-phosphate dehydratase (265 aa).

C118 contributes to the substrate binding site. Positions 136 and 138 each coordinate Zn(2+). The Proton donor/acceptor role is filled by E161. Position 226 (H226) interacts with Zn(2+).

The protein belongs to the aldolase class II family. MtnB subfamily. Requires Zn(2+) as cofactor.

The protein resides in the cytoplasm. The enzyme catalyses 5-(methylsulfanyl)-D-ribulose 1-phosphate = 5-methylsulfanyl-2,3-dioxopentyl phosphate + H2O. The protein operates within amino-acid biosynthesis; L-methionine biosynthesis via salvage pathway; L-methionine from S-methyl-5-thio-alpha-D-ribose 1-phosphate: step 2/6. In terms of biological role, catalyzes the dehydration of methylthioribulose-1-phosphate (MTRu-1-P) into 2,3-diketo-5-methylthiopentyl-1-phosphate (DK-MTP-1-P). This is Methylthioribulose-1-phosphate dehydratase from Scheffersomyces stipitis (strain ATCC 58785 / CBS 6054 / NBRC 10063 / NRRL Y-11545) (Yeast).